A 353-amino-acid chain; its full sequence is Dihydroorotate dehydrogenase (quinone) (353 aa).

Residues 66–70 (AGFDK) and T90 contribute to the FMN site. Position 70 (K70) interacts with substrate. Position 115-119 (115-119 (NRMGF)) interacts with substrate. FMN-binding residues include N143 and N176. N176 is a binding site for substrate. S179 acts as the Nucleophile in catalysis. Substrate is bound at residue N181. FMN contacts are provided by K212 and T240. Position 241-242 (241-242 (NT)) interacts with substrate. FMN is bound by residues G264, G293, and 314-315 (YT).

Belongs to the dihydroorotate dehydrogenase family. Type 2 subfamily. Monomer. FMN is required as a cofactor.

The protein localises to the cell membrane. The catalysed reaction is (S)-dihydroorotate + a quinone = orotate + a quinol. Its pathway is pyrimidine metabolism; UMP biosynthesis via de novo pathway; orotate from (S)-dihydroorotate (quinone route): step 1/1. Catalyzes the conversion of dihydroorotate to orotate with quinone as electron acceptor. The sequence is that of Dihydroorotate dehydrogenase (quinone) from Mycolicibacterium gilvum (strain PYR-GCK) (Mycobacterium gilvum (strain PYR-GCK)).